The primary structure comprises 157 residues: MNKKETRHQLIRSLISETTIHTQQELQERLQKNGITITQATLSRDMKELNLVKVTSGNDTHYEALAISQTRWEHRLRFYMEDALVMLKIVQHQIILKTLPGLAQSFGSILDAMQIPEIVATVCGDDTCLIVCEDNEQAKACYETLSHYTPPFFFSNK.

Belongs to the ArgR family.

Its subcellular location is the cytoplasm. It participates in amino-acid degradation; L-arginine degradation via ADI pathway. Its function is as follows. Regulates the transcription of the arc operon, involved in arginine catabolism. In Streptococcus pyogenes serotype M3 (strain ATCC BAA-595 / MGAS315), this protein is Arginine regulator (argR1).